A 246-amino-acid chain; its full sequence is Probable septum site-determining protein MinC (246 aa).

The protein belongs to the MinC family. In terms of assembly, interacts with MinD and FtsZ.

Cell division inhibitor that blocks the formation of polar Z ring septums. Rapidly oscillates between the poles of the cell to destabilize FtsZ filaments that have formed before they mature into polar Z rings. Prevents FtsZ polymerization. The polypeptide is Probable septum site-determining protein MinC (Pseudomonas syringae pv. tomato (strain ATCC BAA-871 / DC3000)).